A 241-amino-acid polypeptide reads, in one-letter code: Biosynthetic peptidoglycan transglycosylase (241 aa).

Residues 18–38 (GVIGIIALWMAGILIFAFLPV) traverse the membrane as a helical segment.

The protein belongs to the glycosyltransferase 51 family.

It is found in the cell inner membrane. It catalyses the reaction [GlcNAc-(1-&gt;4)-Mur2Ac(oyl-L-Ala-gamma-D-Glu-L-Lys-D-Ala-D-Ala)](n)-di-trans,octa-cis-undecaprenyl diphosphate + beta-D-GlcNAc-(1-&gt;4)-Mur2Ac(oyl-L-Ala-gamma-D-Glu-L-Lys-D-Ala-D-Ala)-di-trans,octa-cis-undecaprenyl diphosphate = [GlcNAc-(1-&gt;4)-Mur2Ac(oyl-L-Ala-gamma-D-Glu-L-Lys-D-Ala-D-Ala)](n+1)-di-trans,octa-cis-undecaprenyl diphosphate + di-trans,octa-cis-undecaprenyl diphosphate + H(+). It functions in the pathway cell wall biogenesis; peptidoglycan biosynthesis. Its function is as follows. Peptidoglycan polymerase that catalyzes glycan chain elongation from lipid-linked precursors. This is Biosynthetic peptidoglycan transglycosylase from Yersinia pestis bv. Antiqua (strain Antiqua).